A 150-amino-acid chain; its full sequence is Putative ribosome maturation factor RimP (150 aa).

This sequence belongs to the RimP family.

It is found in the cytoplasm. Functionally, required for maturation of 30S ribosomal subunits. In Mycobacterium leprae (strain TN), this protein is Putative ribosome maturation factor RimP.